Consider the following 1041-residue polypeptide: Putative transcription elongation factor SPT5 homolog 1 (1041 aa).

Residues 1 to 133 (MPRSRDEDDE…ERGDRRYERR (133 aa)) are disordered. Composition is skewed to acidic residues over residues 7-32 (EDDELDGDYEALDLEEEEEEDEEEEE), 53-69 (DYAEEDSQEEDDDDEDY), and 99-114 (DDEDEEEEDEAEDDFI). A Phosphoserine modification is found at serine 59. The span at 122-133 (PDERGDRRYERR) shows a compositional bias: basic and acidic residues. KOW domains are found at residues 273-300 (DLSRDTWVRMKIGTYKGDLAKVVDVDNV), 425-452 (HFMKGDAVIVIKGDLKNLKGWVEKVDEE), 477-504 (YFEPGNHVKVVSGTHEGATGMVVKVDQH), and 601-628 (VIAVKDDVRVIEGPSKGKQGPVKHIYKG). 2 disordered regions span residues 662 to 713 (NRNG…GDDS) and 768 to 921 (DTSR…GTGL). Residues 691–703 (GRGGGYNNSGGRH) show a composition bias toward gly residues. The KOW 5 domain maps to 712–739 (DSLLGTTVKIRLGPFKGYRGPVVEVKGN). Over residues 804-814 (DGMRTPMRDRA) the composition is skewed to basic and acidic residues. 2 stretches are compositionally biased toward polar residues: residues 835 to 844 (SWGTSPQYQP) and 893 to 904 (TPGQPMTPSSAS). Residues 988–1015 (PPRKSDRVKIVGGQYRGSTGKLIGIDGS) enclose the KOW 6 domain.

Belongs to the SPT5 family.

It localises to the nucleus. Functionally, may regulate transcription elongation by RNA polymerase II. May enhance transcriptional pausing at sites proximal to the promoter, which may in turn facilitate the assembly of an elongation competent RNA polymerase II complex. The protein is Putative transcription elongation factor SPT5 homolog 1 of Arabidopsis thaliana (Mouse-ear cress).